We begin with the raw amino-acid sequence, 554 residues long: HMG box-containing protein 4 (554 aa).

3 disordered regions span residues 14–34 (RGME…KRSY), 47–368 (QVRK…SAYQ), and 418–468 (HKQN…SPAK). Positions 117-127 (TSPQVDTSTTH) are enriched in polar residues. Residues 221 to 230 (TGREETESRS) show a composition bias toward basic and acidic residues. Over residues 242–255 (PRSGGTPDSASSTG) the composition is skewed to polar residues. Basic residues predominate over residues 272-300 (MKKKKKSKKSKKKKDKHKDEKHRKHSKSK). The segment covering 317–335 (LPSPPPPTATTPTSPPSVP) has biased composition (pro residues). Residues 342–358 (HAEEQLDKKKKKEDPEK) are compositionally biased toward basic and acidic residues. The segment at residues 360-428 (KKKNMSAYQV…KQNKAEATTV (69 aa)) is a DNA-binding region (HMG box). A compositionally biased stretch (low complexity) spans 434–466 (SSESAARSKGSSSGLPSPNKKSPTSVVSFSTSP).

As to quaternary structure, interacts with nlk.2.

The protein localises to the nucleus. Negatively regulates Wnt/beta-catenin signaling during development. The sequence is that of HMG box-containing protein 4 (hmgxb4) from Xenopus tropicalis (Western clawed frog).